A 128-amino-acid polypeptide reads, in one-letter code: Otoraplin (128 aa).

An N-terminal signal peptide occupies residues 1-17; the sequence is MARILLLFLPGLVAVCA. 2 cysteine pairs are disulfide-bonded: Cys-32–Cys-37 and Cys-55–Cys-127. The SH3 domain occupies 39–110; that stretch reads YTISLASAQE…PRNLVKEQRV (72 aa).

This sequence belongs to the MIA/OTOR family. As to expression, highly expressed in cochlea.

It localises to the secreted. The polypeptide is Otoraplin (OTOR) (Homo sapiens (Human)).